The sequence spans 100 residues: MICOS complex subunit MIC12 (100 aa).

A helical membrane pass occupies residues 10-26 (FATISSVAAASLYLYAI).

It belongs to the MICOS complex subunit Mic12 family. In terms of assembly, component of the mitochondrial contact site and cristae organizing system (MICOS) complex.

It localises to the mitochondrion inner membrane. Component of the MICOS complex, a large protein complex of the mitochondrial inner membrane that plays crucial roles in the maintenance of crista junctions, inner membrane architecture, and formation of contact sites to the outer membrane. The sequence is that of MICOS complex subunit MIC12 (AIM5) from Vanderwaltozyma polyspora (strain ATCC 22028 / DSM 70294 / BCRC 21397 / CBS 2163 / NBRC 10782 / NRRL Y-8283 / UCD 57-17) (Kluyveromyces polysporus).